The sequence spans 212 residues: Pyridoxine/pyridoxamine 5'-phosphate oxidase (212 aa).

Substrate is bound by residues 8–11 (RREY) and Lys-66. FMN is bound by residues 61 to 66 (RIVLLK), 76 to 77 (FT), Arg-82, Lys-83, and Gln-105. Substrate-binding residues include Tyr-123, Arg-127, and Ser-131. FMN contacts are provided by residues 140–141 (QS) and Trp-185. 191 to 193 (RLH) serves as a coordination point for substrate. Position 195 (Arg-195) interacts with FMN.

The protein belongs to the pyridoxamine 5'-phosphate oxidase family. As to quaternary structure, homodimer. The cofactor is FMN.

The enzyme catalyses pyridoxamine 5'-phosphate + O2 + H2O = pyridoxal 5'-phosphate + H2O2 + NH4(+). The catalysed reaction is pyridoxine 5'-phosphate + O2 = pyridoxal 5'-phosphate + H2O2. It participates in cofactor metabolism; pyridoxal 5'-phosphate salvage; pyridoxal 5'-phosphate from pyridoxamine 5'-phosphate: step 1/1. Its pathway is cofactor metabolism; pyridoxal 5'-phosphate salvage; pyridoxal 5'-phosphate from pyridoxine 5'-phosphate: step 1/1. In terms of biological role, catalyzes the oxidation of either pyridoxine 5'-phosphate (PNP) or pyridoxamine 5'-phosphate (PMP) into pyridoxal 5'-phosphate (PLP). The protein is Pyridoxine/pyridoxamine 5'-phosphate oxidase of Shewanella baltica (strain OS223).